Reading from the N-terminus, the 1256-residue chain is Putative protein DDB_G0292252 (1256 aa).

4 disordered regions span residues 1-53 (MSDD…NNNN), 145-243 (LLNG…SISR), 898-951 (EQQQ…PVET), and 1069-1136 (SHPT…ATIS). Residues 147–214 (NGNNSNNNSN…NGNNINTSNG (68 aa)) are compositionally biased toward low complexity. Over residues 222-243 (QTESTEQDFTSTSQNSTPSISR) the composition is skewed to polar residues. 2 stretches are compositionally biased toward low complexity: residues 898-916 (EQQQQQQQQQSNLNNSNNE) and 925-942 (TTAATTTTTTTTTTTTTT). Residues 1069–1079 (SHPTIQSTSSP) are compositionally biased toward polar residues. Residues 1080–1136 (STSSSNNNNSTTTATNNNGNNGNNNNGNGNNNNNNNNNNNNNNNNNNNNNNGPATIS) show a composition bias toward low complexity.

This is Putative protein DDB_G0292252 from Dictyostelium discoideum (Social amoeba).